A 139-amino-acid polypeptide reads, in one-letter code: AALLVALLFVANAAAFRTTITTMEIDEDIDNPRRRGEGCREQIQRQQNLNHCQYYLRQQSRSGGYDEDNQRQHFRQCCQQLSQMDEQCQCEGLRQVVRRQQQQQGLRGEEMEEMVQSARDLPNECGISSQRCEIRRSWF.

An N-terminal signal peptide occupies residues 1–15 (AALLVALLFVANAAA). IgE-binding stretches follow at residues 16–30 (FRTTITTMEIDEDID), 29–34 (IDNPRR), 64–78 (GYDEDNQRQHFRQCC), 65–73 (YDEDNQRQH), 95–103 (QVVRRQQQQ), 99–111 (RQQQQQGLRGEEM), 102–114 (QQQGLRGEEMEEM), 105–117 (GLRGEEMEEMVQS), 112–126 (EEMVQSARDLPNECG), 125–136 (CGISSQRCEIRR), and 125–139 (CGISSQRCEIRRSWF). 2 consecutive propeptides follow at residues 16-31 (FRTTITTMEIDEDIDN) and 58-71 (QQSRSGGYDEDNQR). Cystine bridges form between C39/C88, C52/C77, C78/C125, and C90/C132. The segment at 104–115 (QGLRGEEMEEMV) is immunodominant epitope. IgE-binding; binds to IgE in 75% of the 20 walnut-allergic patients tested. Residues 107-110 (RGEE) are minimally required for IgE-binding by the immunodominant epitope. The propeptide occupies 136-139 (RSWF).

It belongs to the 2S seed storage albumins family. As to quaternary structure, the mature protein consists of a small chain and a large chain linked by disulfide bonds. Expressed in seed (at protein level). Expressed in the peel of mature seed.

In terms of biological role, seed storage protein. This chain is 2S seed storage albumin protein, found in Juglans regia (English walnut).